A 474-amino-acid chain; its full sequence is ATP synthase subunit beta 1 (474 aa).

157-164 (GGAGVGKT) contributes to the ATP binding site.

Belongs to the ATPase alpha/beta chains family. F-type ATPases have 2 components, CF(1) - the catalytic core - and CF(0) - the membrane proton channel. CF(1) has five subunits: alpha(3), beta(3), gamma(1), delta(1), epsilon(1). CF(0) has three main subunits: a(1), b(2) and c(9-12). The alpha and beta chains form an alternating ring which encloses part of the gamma chain. CF(1) is attached to CF(0) by a central stalk formed by the gamma and epsilon chains, while a peripheral stalk is formed by the delta and b chains.

Its subcellular location is the cell inner membrane. The enzyme catalyses ATP + H2O + 4 H(+)(in) = ADP + phosphate + 5 H(+)(out). Its function is as follows. Produces ATP from ADP in the presence of a proton gradient across the membrane. The catalytic sites are hosted primarily by the beta subunits. The protein is ATP synthase subunit beta 1 of Albidiferax ferrireducens (strain ATCC BAA-621 / DSM 15236 / T118) (Rhodoferax ferrireducens).